Consider the following 159-residue polypeptide: Transcription elongation factor A protein-like 1 (159 aa).

Residues Met-1–Glu-99 form a disordered region. Positions Lys-17–Leu-34 are enriched in basic and acidic residues. Over residues Gln-37–Leu-54 the composition is skewed to acidic residues. Residues Ser-64–Glu-80 are compositionally biased toward basic and acidic residues.

Belongs to the TFS-II family. TFA subfamily.

It is found in the nucleus. Functionally, may be involved in transcriptional regulation. Modulates various viral and cellular promoters in a promoter context-dependent manner. Does not bind DNA directly. The polypeptide is Transcription elongation factor A protein-like 1 (Ateles geoffroyi (Black-handed spider monkey)).